We begin with the raw amino-acid sequence, 318 residues long: NADH-ubiquinone oxidoreductase chain 1 (318 aa).

A run of 8 helical transmembrane segments spans residues 2-22 (FMAN…FLTL), 69-89 (MLYL…WTPL), 98-118 (FNLG…SILW), 140-160 (ISYE…SGSF), 171-191 (HSWL…STLA), 222-242 (LFFM…TTIF), 253-273 (ETYS…FLWI), and 285-305 (LMHL…MWYI).

The protein belongs to the complex I subunit 1 family. Core subunit of respiratory chain NADH dehydrogenase (Complex I) which is composed of 45 different subunits.

Its subcellular location is the mitochondrion inner membrane. The enzyme catalyses a ubiquinone + NADH + 5 H(+)(in) = a ubiquinol + NAD(+) + 4 H(+)(out). Its function is as follows. Core subunit of the mitochondrial membrane respiratory chain NADH dehydrogenase (Complex I) which catalyzes electron transfer from NADH through the respiratory chain, using ubiquinone as an electron acceptor. Essential for the catalytic activity and assembly of complex I. In Saguinus leucopus (Silvery-brown bare-face tamarin), this protein is NADH-ubiquinone oxidoreductase chain 1 (MT-ND1).